Consider the following 512-residue polypeptide: MLIGVPRELLENESRVAATPKTVQQILKLGFDVIVEHDAGFKASFEDQAFLEAGAKIGTSAEIWQSDIIFKVNAPTDEEIAQMKEGAALVSFIWRMQNPELMKKLTAKKINVLAMDAVPRISRAQALDALSSMANISGYRAVIEAAHEFGSFFTGQITAAGKVPPAKVLVIGAGVAGLAAIGAANSLGAIVRAFDSRPEVKEQVQSMGASFLEIDFKEEGGSGDGYAKVMSEEFNRRAMELYAEQAKEVDIIITTAAIPGKPAPRLITKEMVDSMKPGSVIVDLAAATGGNCEYTQAGKVVTTENQVKVIGYTDFPSRLPTQSSQLYGTNLVNLLKLLCKEKDGNINIDFEDVVLRGVTVVRDGEEIPPAQIQVSAQPKQETKAAPVAEKKESKPTDPRVKYGVMAGVGVLFLWLASVAPAAFLSHFTVFVLACVVGYYVVWNVSHALHTPLMAVTNAISGIIIVGALLQIRQPTGNLFIDALAFVAILVASINIFGGFRVTQRMLAMFRKG.

Residues methionine 1–valine 400 lie on the Cytoplasmic side of the membrane. NAD(+) is bound by residues glutamine 125–aspartate 128, valine 175, aspartate 195–arginine 197, and glycine 225. Positions serine 375 to lysine 394 are disordered. The next 2 helical transmembrane spans lie at lysine 401–alanine 421 and alanine 422–tryptophan 442. Residues asparagine 443–proline 451 are Cytoplasmic-facing. A helical transmembrane segment spans residues leucine 452–arginine 472. The Periplasmic segment spans residues glutamine 473–leucine 478. Residues phenylalanine 479–phenylalanine 499 traverse the membrane as a helical segment. Topologically, residues arginine 500 to glycine 512 are cytoplasmic.

Belongs to the AlaDH/PNT family. In terms of assembly, heterodimer of an alpha (PntA) and a beta (PntB) chain.

It is found in the cell inner membrane. The catalysed reaction is NAD(+) + NADPH + H(+)(in) = NADH + NADP(+) + H(+)(out). Its function is as follows. The transhydrogenation between NADH and NADP is coupled to respiration and ATP hydrolysis and functions as a proton pump across the membrane. This Haemophilus influenzae (strain ATCC 51907 / DSM 11121 / KW20 / Rd) protein is NAD(P) transhydrogenase subunit alpha (pntA).